The primary structure comprises 247 residues: Protein NipSnap homolog 3B (247 aa).

An N6-succinyllysine mark is found at lysine 45 and lysine 57.

Belongs to the NipSnap family.

The protein is Protein NipSnap homolog 3B (NIPSNAP3B) of Homo sapiens (Human).